Reading from the N-terminus, the 236-residue chain is Envelope glycoprotein (236 aa).

The Lumenal portion of the chain corresponds to 1 to 202 (CQFDGNTISG…EWILGVLNGN (202 aa)). An N-linked (GlcNAc...) asparagine; by host glycan is attached at N25. Cystine bridges form between C67-C97, C90-C142, C107-C112, C143-C148, and C182-C186. A helical transmembrane segment spans residues 203–223 (WMVVAVLIALLILSILLFTLC). Binding to the ribonucleoprotein regions lie at residues 219–231 (LFTLCCPRRPSYR) and 219–236 (LFTLCCPRRPSYRKEHKP). Topologically, residues 224-236 (CPRRPSYRKEHKP) are cytoplasmic.

Belongs to the hantavirus envelope glycoprotein family. Homodimer. Homotetramer; forms heterotetrameric Gn-Gc spikes in the pre-fusion conformation. Homotrimer; forms homotrimer in the post-fusion conformation at acidic pH. Interacts (via C-terminus) with the nucleoprotein. In terms of processing, envelope polyprotein precursor is quickly cleaved in vivo just after synthesis, presumably by host signal peptidase.

The protein localises to the virion membrane. It is found in the host cell surface. The protein resides in the host Golgi apparatus membrane. It localises to the host endoplasmic reticulum membrane. Its function is as follows. Forms homotetramers with glycoprotein N at the surface of the virion. Attaches the virion to host cell receptors including integrin ITGAV/ITGB3. This attachment induces virion internalization predominantly through clathrin-dependent endocytosis. Class II fusion protein that promotes fusion of viral membrane with host endosomal membrane after endocytosis of the virion. The chain is Envelope glycoprotein (GP) from Homo sapiens (Human).